We begin with the raw amino-acid sequence, 520 residues long: RNA-binding protein MEX3A (520 aa).

The disordered stretch occupies residues G49–S111. Residues E60–A69 show a composition bias toward gly residues. The segment covering P73–A91 has biased composition (pro residues). KH domains are found at residues T132–I193 and Q223–I284. A Phosphoserine modification is found at S338. The segment at S412–R461 is disordered. The residue at position 462 (S462) is a Phosphoserine. An RING-type zinc finger spans residues C469–H509.

Phosphorylated. Highest levels found in fetal brain and testis. Detected also in thymus, salivary gland and uterus.

The protein localises to the cytoplasm. The protein resides in the nucleus. It localises to the P-body. In terms of biological role, RNA binding protein, may be involved in post-transcriptional regulatory mechanisms. The protein is RNA-binding protein MEX3A (MEX3A) of Homo sapiens (Human).